Here is a 342-residue protein sequence, read N- to C-terminus: MRAPEFQANAITSTGCDVCLDPQKSFAKLFKRTIILLAGPTGSGKTDVSLCLAPMVDGEIVSVDSMQVYRGMDIGTAKVSLEARQRIPHYLIDICHVQELFNAVDFYYQATQACQNILSRNKVPILVGGSGFYFHTFLSGPPEGPPADREFRDHLALYIQKNGLSLLYDNLCMKDPEYARTITKNDKNKIVRALEIIHLTGKKVSEHNWSMEAKEPREYNCRGWFLSSPRDLLRDNIQLRCRRMLEDNLIDEVHRLLEQGIRENPSASKAIGYREWIDFIDQGSPKEAYEDVKNKFIANTLYYIKKQRTWFKRYPMFRELPTLGLTAETIAEKIAEDYFLHG.

Position 39–46 (39–46 (GPTGSGKT)) interacts with ATP. 41–46 (TGSGKT) contacts substrate. Residues 64-67 (DSMQ) are interaction with substrate tRNA.

This sequence belongs to the IPP transferase family. Monomer. Requires Mg(2+) as cofactor.

The enzyme catalyses adenosine(37) in tRNA + dimethylallyl diphosphate = N(6)-dimethylallyladenosine(37) in tRNA + diphosphate. In terms of biological role, catalyzes the transfer of a dimethylallyl group onto the adenine at position 37 in tRNAs that read codons beginning with uridine, leading to the formation of N6-(dimethylallyl)adenosine (i(6)A). This is tRNA dimethylallyltransferase from Chlamydia felis (strain Fe/C-56) (Chlamydophila felis).